A 666-amino-acid chain; its full sequence is Zinc finger protein 710 (666 aa).

Glycyl lysine isopeptide (Lys-Gly) (interchain with G-Cter in SUMO2) cross-links involve residues K110 and K113. The tract at residues K113–A141 is disordered. 3 C2H2-type zinc fingers span residues W297 to H319, H325 to H347, and H353 to H375. K379 participates in a covalent cross-link: Glycyl lysine isopeptide (Lys-Gly) (interchain with G-Cter in SUMO2). C2H2-type zinc fingers lie at residues Y381–H403, H409–H431, Y437–H459, F465–H487, F493–H515, Y521–H543, F549–H571, and F577–H600.

Belongs to the krueppel C2H2-type zinc-finger protein family.

It localises to the nucleus. In terms of biological role, may be involved in transcriptional regulation. This is Zinc finger protein 710 (Znf710) from Mus musculus (Mouse).